We begin with the raw amino-acid sequence, 508 residues long: Drug efflux pump JefA (508 aa).

14 helical membrane passes run 9 to 29 (VLATGLGIFMVFVDVNIVNVA), 46 to 66 (WAVAGYSLGMAAVLMSCALLG), 75 to 95 (FVFGVTLFVVSSIVCVLPVSL), 104 to 124 (IQGLGAAFISVLSLALLSHSF), 136 to 156 (NWMAIGMVGAASAPALGGLMV), 163 to 183 (SVFLVNVPLGAIVWLLTLVGV), 194 to 214 (LDWVGQLTLIPAVALIAYTII), 222 to 242 (QSAGFVAALLLAAGVLLWLFV), 265 to 285 (SVLIVYFVVMSCFFGTLMVIT), 297 to 317 (LHAGLMMLPVPAGFGVASLLA), 328 to 348 (LPVLTCLAAMFIGLAIFAISM), 354 to 374 (VALVGLTIFGAGAGGCATPLL), 399 to 419 (LGGIFGVAFLGTIVAAWLGAA), and 479 to 499 (GIKLALGGAAVLLTGAFVLGW).

Belongs to the major facilitator superfamily.

The protein resides in the cell inner membrane. In terms of biological role, involved in resistance to ethambutol and isoniazid. In Mycobacterium tuberculosis (strain CDC 1551 / Oshkosh), this protein is Drug efflux pump JefA.